We begin with the raw amino-acid sequence, 309 residues long: Ribosomal RNA small subunit methyltransferase H (309 aa).

S-adenosyl-L-methionine contacts are provided by residues 33–35 (GGH), aspartate 53, phenylalanine 79, aspartate 100, and glutamine 107.

Belongs to the methyltransferase superfamily. RsmH family.

The protein localises to the cytoplasm. The enzyme catalyses cytidine(1402) in 16S rRNA + S-adenosyl-L-methionine = N(4)-methylcytidine(1402) in 16S rRNA + S-adenosyl-L-homocysteine + H(+). Functionally, specifically methylates the N4 position of cytidine in position 1402 (C1402) of 16S rRNA. The sequence is that of Ribosomal RNA small subunit methyltransferase H from Clostridium botulinum (strain Kyoto / Type A2).